The primary structure comprises 273 residues: SUMO-1 cysteine protease S273R (273 aa).

Residues His168 and Asn187 contribute to the active site. A substrate-binding site is contributed by Gln226. Cys232 acts as the Nucleophile in catalysis.

This sequence belongs to the peptidase C63 family.

Its subcellular location is the host cytoplasm. The protein localises to the virion. Functionally, cysteine protease that plays several role during infection including processing of the structural polyprotein or inhibition of the host immune response. Catalyzes the maturation of the pp220 and pp62 polyprotein precursors into core-shell proteins. Plays a role in the disruption of host pyroptosis via specific cleavage of gasdermin D/GSDMD. In addition, strongly decreases the host cGAS-STING signaling by targeting IKBKE via its enzymatic activity. Also impairs host FOXJ1-mediated antiviral effect via degradation of FOXJ1. The chain is SUMO-1 cysteine protease S273R from Ornithodoros (relapsing fever ticks).